Reading from the N-terminus, the 176-residue chain is Protein MAL2 (176 aa).

Topologically, residues 1-34 are cytoplasmic; the sequence is MSAGGASVPPPPNPAVSFPVPRVTLPAGPDILRT. Residues 31–175 enclose the MARVEL domain; it reads ILRTYSGAFV…SLGLALRRWR (145 aa). The helical transmembrane segment at 35 to 55 threads the bilayer; it reads YSGAFVCLEILFGGLVWILVA. Topologically, residues 56–66 are lumenal; that stretch reads SSNVPLPLLQG. The chain crosses the membrane as a helical span at residues 67–87; the sequence is WVMFVSVTAFFFSLLFLGLFL. Residues 88 to 102 are Cytoplasmic-facing; sequence SGMVTQIDANWNFLD. The helical transmembrane segment at 103–123 threads the bilayer; sequence FAYHFTVFVFYFGAFLLEAAA. Residues 124–149 are Lumenal-facing; it reads TSLHDLHYNITMTGQPLLNDNQYNIN. The N-linked (GlcNAc...) asparagine glycan is linked to Asn-132. The chain crosses the membrane as a helical span at residues 150–170; sequence VAASIFAFMTTACYGCSLGLA. The Cytoplasmic segment spans residues 171–176; it reads LRRWRP.

Belongs to the MAL family. Interacts with TPD52L2.

The protein localises to the cell membrane. The protein resides in the apical cell membrane. Its function is as follows. Member of the machinery of polarized transport. Required for the indirect transcytotic route at the step of the egress of the transcytosing cargo from perinuclear endosomes in order for it to travel to the apical surface via a raft-dependent pathway. This chain is Protein MAL2 (MAL2), found in Pongo abelii (Sumatran orangutan).